A 1214-amino-acid polypeptide reads, in one-letter code: Peregrin (1214 aa).

Residues 21 to 47 form a C2H2-type zinc finger; that stretch reads YECPVETCRKVYKSYSGIEYHLYHYDH. 2 disordered regions span residues 43 to 87 and 118 to 177; these read YHYD…SPGR and VVSE…PKLP. Residues 58–67 are compositionally biased toward basic residues; that stretch reads LRKHKKKGRQ. An interaction with KAT6A and KAT6B region spans residues 59–222; that stretch reads RKHKKKGRQS…VEYDMDEEDY (164 aa). The segment covering 74–85 has biased composition (low complexity); that stretch reads QSPSPSEVSQSP. The segment covering 119-130 has biased composition (acidic residues); the sequence is VSEDEEAPEEAP. Residue serine 120 is modified to Phosphoserine. Lysine 147 carries the post-translational modification N6-acetyllysine. Over residues 148-167 the composition is skewed to basic residues; the sequence is SGKHKNKEKRKDSNHHHHHN. Serine 238 bears the Phosphoserine mark. A PHD-type 1 zinc finger spans residues 273 to 323; it reads DAVCCICNDGECQNSNVILFCDMCNLAVHQECYGVPYIPEGQWLCRRCLQS. The C2HC pre-PHD-type zinc finger occupies 327 to 360; that stretch reads AVDCALCPNKGGAFKQTDDGRWAHVVCALWIPEV. The PHD-type 2 zinc-finger motif lies at 384–448; it reads LTCYICKQRG…RKTAYCDIHT (65 aa). The interval 448–489 is disordered; that stretch reads TPPGSARRLPALSHSEGEEDEDEEEDEGKGWSSEKVKKAKAK. Phosphoserine is present on residues serine 460 and serine 462. Positions 464–474 are enriched in acidic residues; that stretch reads GEEDEDEEEDE. The interaction with MEAF6 and ING5 stretch occupies residues 501–821; it reads LAEKRAAAPV…IKKEMTALRR (321 aa). The required for RUNX1 and RUNX2 transcriptional activation stretch occupies residues 543-1079; that stretch reads YWTLKRQSRN…RGAGWLSEDE (537 aa). Lysine 580 is subject to N6-acetyllysine. In terms of domain architecture, Bromo spans 628-732; that stretch reads MQLTPFLILL…EQGGAVLRQA (105 aa). The disordered stretch occupies residues 819–1062; the sequence is LRRKLAHQRE…VGTGRGVGHS (244 aa). A compositionally biased stretch (basic and acidic residues) spans 825–838; sequence HQRETGRDGPERHG. Phosphothreonine is present on threonine 858. Positions 858 to 871 are enriched in low complexity; that stretch reads TDSAAEESSSQETS. 4 positions are modified to phosphoserine: serine 860, serine 917, serine 922, and serine 926. Over residues 993 to 1021 the composition is skewed to low complexity; sequence SLPRSSSDSESSSSSSSSAASDRTSTTPS. At serine 1076 the chain carries Phosphoserine. The PWWP domain occupies 1085–1168; the sequence is ALDLVWAKCR…RTKLVPLGVN (84 aa). At serine 1187 the chain carries Phosphoserine.

Component of some HBO1 complex composed of KAT7/HBO1, MEAF6, ING5, and BRPF1. Component of the MOZ/MORF complex composed at least of ING5, KAT6A, KAT6B, MEAF6 and one of BRPF1, BRD1/BRPF2 and BRPF3. Interacts (via PHD-type zinc finger domains) with unmethylated histone H3 at 'Lys-4' (H3K4me0). Interacts with trimethylated 'Lys-36' of histone H3 (H3K36me3). Interacts with ING5; interaction directs BRPF1 to H4K4me3-enriched chromatin at the 5' of active genes. Interacts with KAT7. In terms of processing, acetylated by KAT6A. High levels in testis.

The protein localises to the nucleus. It is found in the chromosome. Its subcellular location is the cytoplasm. Its function is as follows. Scaffold subunit of various histone acetyltransferase (HAT) complexes, such as the MOZ/MORF and HBO1 complexes, which have a histone H3 acetyltransferase activity. Plays a key role in HBO1 complex by directing KAT7/HBO1 specificity towards histone H3 'Lys-14' acetylation (H3K14ac). Some HAT complexes preferentially mediate histone H3 'Lys-23' (H3K23ac) acetylation. Positively regulates the transcription of RUNX1 and RUNX2. In Homo sapiens (Human), this protein is Peregrin.